The following is a 214-amino-acid chain: Zinc finger protein 11 (214 aa).

Residues 1-27 form a disordered region; it reads MKRTHLASFSNRDKTQEEEGEDGNGDN. Residues 49–71 form a C2H2-type zinc finger; the sequence is YTCSFCRREFRSAQALGGHMNVH. The short motif at 72–79 is the Nuclear localization signal element; that stretch reads RRDRAKLR. The disordered stretch occupies residues 89-130; the sequence is HHHTPIANPNPNFSSSSSSSTTTAHLEPSLTNQRSKTTPFPS. Low complexity predominate over residues 102 to 111; it reads SSSSSSSTTT. Positions 117 to 128 are enriched in polar residues; sequence SLTNQRSKTTPF.

Expressed in roots, stems, axillary buds and flowers.

The protein resides in the nucleus. Probable transcription factor that may regulate cell division and growth. This is Zinc finger protein 11 from Arabidopsis thaliana (Mouse-ear cress).